Consider the following 116-residue polypeptide: Flagellar transcriptional regulator FlhD (116 aa).

Belongs to the FlhD family. As to quaternary structure, homodimer; disulfide-linked. Forms a heterohexamer composed of two FlhC and four FlhD subunits. Each FlhC binds a FlhD dimer, forming a heterotrimer, and a hexamer assembles by dimerization of two heterotrimers.

The protein resides in the cytoplasm. In terms of biological role, functions in complex with FlhC as a master transcriptional regulator that regulates transcription of several flagellar and non-flagellar operons by binding to their promoter region. Activates expression of class 2 flagellar genes, including fliA, which is a flagellum-specific sigma factor that turns on the class 3 genes. Also regulates genes whose products function in a variety of physiological pathways. This Escherichia coli O157:H7 protein is Flagellar transcriptional regulator FlhD.